Reading from the N-terminus, the 89-residue chain is Protein S100-A8 (89 aa).

EF-hand domains lie at 13–48 (IDVYHNYSNIQGNHHALYKNDFKKMVTTECPQFVQN) and 46–81 (VQNINIENLFRELDINSDNAINFEEFLAMVIKVGVA). Zn(2+) is bound by residues H17 and H27. Position 33 (D33) interacts with Ca(2+). C42 bears the S-nitrosocysteine mark. Ca(2+) is bound by residues D59, N61, D63, and E70. H83 is a binding site for Zn(2+).

Belongs to the S-100 family. Homodimer. Preferentially exists as a heterodimer or heterotetramer with S100A9 known as calprotectin (S100A8/A9). Calprotectin (S100A8/9) interacts with CEACAM3 and tubulin filaments in a calcium-dependent manner. Heterotetrameric calprotectin (S100A8/A9) interacts with ANXA6 and associates with tubulin filaments in activated monocytes. S100A8 and calprotectin (S100A8/9) interact with NCF2/P67PHOX, RAC1 and RAC2. Calprotectin (S100A8/9) interacts with CYBA and CYBB. S100A8 interacts with AGER, ATP2A2 and with the heterodimeric complex formed by TLR4 and LY96. Calprotectin (S100A8/9) interacts with NOS2 to form the iNOS-S100A8/A9 transnitrosylase complex. Calprotectin (S100A8/9) interacts with CD69.

The protein localises to the secreted. It is found in the cytoplasm. It localises to the cytoskeleton. The protein resides in the cell membrane. Calprotectin (S100A8/A9) activity on TLR4 signaling is inhibited by paquinimod. Its function is as follows. S100A8 is a calcium- and zinc-binding protein which plays a prominent role in the regulation of inflammatory processes and immune response. It can induce neutrophil chemotaxis and adhesion. Predominantly found as calprotectin (S100A8/A9) which has a wide plethora of intra- and extracellular functions. The intracellular functions include: facilitating leukocyte arachidonic acid trafficking and metabolism, modulation of the tubulin-dependent cytoskeleton during migration of phagocytes and activation of the neutrophilic NADPH-oxidase. Also participates in regulatory T-cell differentiation together with CD69. Activates NADPH-oxidase by facilitating the enzyme complex assembly at the cell membrane, transferring arachidonic acid, an essential cofactor, to the enzyme complex and S100A8 contributes to the enzyme assembly by directly binding to NCF2/P67PHOX. The extracellular functions involve pro-inflammatory, antimicrobial, oxidant-scavenging and apoptosis-inducing activities. Its pro-inflammatory activity includes recruitment of leukocytes, promotion of cytokine and chemokine production, and regulation of leukocyte adhesion and migration. Acts as an alarmin or a danger associated molecular pattern (DAMP) molecule and stimulates innate immune cells via binding to pattern recognition receptors such as Toll-like receptor 4 (TLR4) and receptor for advanced glycation endproducts (AGER). Binding to TLR4 and AGER activates the MAP-kinase and NF-kappa-B signaling pathways resulting in the amplification of the pro-inflammatory cascade. Has antimicrobial activity towards bacteria and fungi and exerts its antimicrobial activity probably via chelation of Zn(2+) which is essential for microbial growth. Can induce cell death via autophagy and apoptosis and this occurs through the cross-talk of mitochondria and lysosomes via reactive oxygen species (ROS) and the process involves BNIP3. Can regulate neutrophil number and apoptosis by an anti-apoptotic effect; regulates cell survival via ITGAM/ITGB and TLR4 and a signaling mechanism involving MEK-ERK. Its role as an oxidant scavenger has a protective role in preventing exaggerated tissue damage by scavenging oxidants. The iNOS-S100A8/A9 transnitrosylase complex is proposed to direct selective inflammatory stimulus-dependent S-nitrosylation of multiple targets such as GAPDH, ANXA5, EZR, MSN and VIM by recognizing a [IL]-x-C-x-x-[DE] motif; S100A8 seems to contribute to S-nitrosylation site selectivity. (Microbial infection) Upon infection by murine coronavirus (MHV-A59), induces expansion of aberrant immature neutrophils in a TLR4-dependent manner. This Mus musculus (Mouse) protein is Protein S100-A8.